The primary structure comprises 1498 residues: Methyl-CpG-binding domain protein 5 (1498 aa).

Residues 11-81 enclose the MBD domain; that stretch reads DKEGGLAAIQ…KVFNFDPGAA (71 aa). The required for interaction with ASXL1/2/3 stretch occupies residues 57-68; that stretch reads DGTCKCGLECPL. 5 disordered regions span residues 199–274, 329–350, 452–521, 594–642, and 1350–1377; these read PRQR…TPLS, HHKPPQGPPPPPPPSCALQKKP, RIEA…YKDI, LAGN…SGRA, and NGCVPSPSDAKSISSEDDLRNPDSPSSH. Over residues 333-343 the composition is skewed to pro residues; the sequence is PQGPPPPPPPS. Low complexity-rich tracts occupy residues 499–511 and 594–613; these read SPRPSMPSSPSTK and LAGNNSSSSNNSGAVASSGN. The span at 614–624 shows a compositional bias: polar residues; it reads TEGHSTLNTMF. A PWWP domain is found at 1385–1409; the sequence is RTFNVGDLVWGQIKGLTSWPGKFIR. Residues 1473-1498 are disordered; the sequence is SGTVHQIPQGDRQMRPPKPKRRKISR. The span at 1487–1498 shows a compositional bias: basic residues; the sequence is RPPKPKRRKISR.

In terms of assembly, core component of the polycomb repressive deubiquitinase (PR-DUB) complex, at least composed of BAP1, one of ASXL1, ASXL2 or (probably) ASXL3, and one of MBD5 or MBD6. Distinct combinations of ASXL and MBD proteins may preferentially bind specific histone modification marks. The PR-DUB core associates with a number of accessory proteins, including FOXK1, FOXK2, KDM1B, HCFC1 and OGT; KDM1B specifically associates with ASXL2 PR-DUB complexes. Interacts (via MBD domain) with ASXL1, ASXL2 and ASXL3 (via PHD domain); the interaction is probably direct, mediates association with other PR-DUB complex core components. As to expression, expressed at highest levels in adult testis and Brain. Expressed at highest levels in the oocyte.

Its subcellular location is the nucleus. The protein resides in the chromosome. Non-catalytic component of the polycomb repressive deubiquitinase (PR-DUB) complex, a complex that specifically mediates deubiquitination of histone H2A monoubiquitinated at 'Lys-120' (H2AK119ub1). Important for stability of PR-DUB components and stimulating its ubiquitinase activity. As part of the PR-DUB complex, associates with chromatin enriched in histone marks H3K4me1, H3K4me3, and H3K27Ac, but not in H3K27me3. The PR-DUB complex is an epigenetic regulator of gene expression, including genes involved in cell growth and survivability. MBD5 and MBD6 containing complexes associate with distinct chromatin regions enriched in genes involved in different pathways. Heterochromatin recruitment is not mediated by DNA methylation. The PR-DUB complex is an epigenetic regulator of gene expression, including genes involved in development, cell communication, signaling, cell proliferation and cell viability. The sequence is that of Methyl-CpG-binding domain protein 5 (Mbd5) from Mus musculus (Mouse).